A 689-amino-acid chain; its full sequence is ATP-dependent zinc metalloprotease FtsH 2 (689 aa).

The Cytoplasmic segment spans residues 1–3; sequence MRK. The chain crosses the membrane as a helical span at residues 4-24; that stretch reads FFRGASFYILAFIIILFIVQN. Over 25 to 111 the chain is Extracellular; the sequence is FGRPTQEIDE…SAAPPPTTPW (87 aa). Residues 112–132 form a helical membrane-spanning segment; sequence FIELLPSIFMVLIFIVFWFVF. At 133–689 the chain is on the cytoplasmic side; the sequence is MQQSQGGGNR…QDNEENRKEE (557 aa). ATP is bound at residue 205–212; the sequence is GPPGTGKT. His427 serves as a coordination point for Zn(2+). Glu428 is an active-site residue. Residues His431 and Asp503 each contribute to the Zn(2+) site. Residues 661–673 show a composition bias toward basic and acidic residues; sequence EELIEVSSDKEEE. Positions 661 to 689 are disordered; that stretch reads EELIEVSSDKEEEKDNQDDQDNEENRKEE.

In the central section; belongs to the AAA ATPase family. The protein in the C-terminal section; belongs to the peptidase M41 family. Homohexamer. It depends on Zn(2+) as a cofactor.

It localises to the cell membrane. Acts as a processive, ATP-dependent zinc metallopeptidase for both cytoplasmic and membrane proteins. Plays a role in the quality control of integral membrane proteins. The polypeptide is ATP-dependent zinc metalloprotease FtsH 2 (Alkaliphilus metalliredigens (strain QYMF)).